A 157-amino-acid chain; its full sequence is Stalk-specific protein A (157 aa).

The N-terminal stretch at 1–19 is a signal peptide; the sequence is MRSILILLSLLLTIAFASA.

It is found in the secreted. The sequence is that of Stalk-specific protein A (staA) from Dictyostelium discoideum (Social amoeba).